Here is a 1008-residue protein sequence, read N- to C-terminus: Probable pre-mRNA-splicing factor ATP-dependent RNA helicase mog-4 (1008 aa).

Disordered stretches follow at residues 104–146 (SSTK…SESD) and 169–202 (NKKEKDKTRNVMEKKRDDNKDKEGSSMDKLREES). A compositionally biased stretch (low complexity) spans 127–137 (KASKPGKSVKP). Residues 374–538 (IEAVKEHQVL…FDDAPIFRIP (165 aa)) enclose the Helicase ATP-binding domain. ATP is bound at residue 387-394 (GETGSGKT). A DEAH box motif is present at residues 485–488 (DEAH). The Helicase C-terminal domain occupies 563-737 (TIMQIHLTQP…NVVLMLKSLG (175 aa)). The disordered stretch occupies residues 988–1008 (EDATNKKMPKNKGKSGKDLER).

The protein belongs to the DEAD box helicase family. DEAH subfamily. DDX16/PRP8 sub-subfamily. In terms of assembly, interacts with mep-1 and smn-1.

The protein resides in the nucleus. The enzyme catalyses ATP + H2O = ADP + phosphate + H(+). Its function is as follows. ATP-binding RNA helicase involved in pre-mRNA splicing. Operates during embryogenesis. This is Probable pre-mRNA-splicing factor ATP-dependent RNA helicase mog-4 (mog-4) from Caenorhabditis elegans.